We begin with the raw amino-acid sequence, 71 residues long: MCGSYYGNYYGTPGYGFCGYGGLGYGYGGLGCGYGSCCGCGFRRLGCGYGYGSRSLCGYGYGCGSGSGYYY.

Belongs to the KRTAP type 6 family. As to quaternary structure, interacts with hair keratins.

Functionally, in the hair cortex, hair keratin intermediate filaments are embedded in an interfilamentous matrix, consisting of hair keratin-associated proteins (KRTAP), which are essential for the formation of a rigid and resistant hair shaft through their extensive disulfide bond cross-linking with abundant cysteine residues of hair keratins. The matrix proteins include the high-sulfur and high-glycine-tyrosine keratins. The polypeptide is Keratin-associated protein 6-1 (KRTAP6-1) (Homo sapiens (Human)).